Here is a 273-residue protein sequence, read N- to C-terminus: Large ribosomal subunit protein uL2cz/uL2cy (273 aa).

2 disordered regions span residues 1–20 (MAKH…TIDR) and 225–273 (PVDH…RRRK).

Belongs to the universal ribosomal protein uL2 family. As to quaternary structure, part of the 50S ribosomal subunit.

It is found in the plastid. The protein localises to the chloroplast. This chain is Large ribosomal subunit protein uL2cz/uL2cy (rpl2-A), found in Oryza nivara (Indian wild rice).